Reading from the N-terminus, the 518-residue chain is MAQISSMGQGIRTPNLNSYLPKTQKVPLFSHSIFIGSKKITQNSAKSLWVSKEDSVLRVAKSPFRISASVVTAQKPNEIVLQPIKDISGTVKLPGSKSLSNRILLLAALSKGRTVVDNLLSSDDIHYMLGALKTLGLHVEDDNENQRAIVEGCGGQFPVGKKSEEEIQLFLGNAGTAMRPLTAAVTVAGGHSRYVLDGVPRMRERPIGDLVDGLKQLGAEVDCFLGTNCPPVRIVSKGGLPGGKVKLSGSISSQYLTALLMAAPLALGDVEIEIIDKLISVPYVEMTLKLMERFGVSVEHTSSWDKFLVRGGQKYKSPGKAYVEGDASSASYFLAGAAVTGGTVTVEGCGTSSLQGDVKFAEVLEKMGAEVTWTENSVTVKGPPRNSSGMKHLRAVDVNMNKMPDVAMTLAVVALFADGPTAIRDVASWRVKETERMIAICTELRKLGATVVEGSDYCIITPPEKLNVTEIDTYDDHRMAMAFSLAACADVPVTIKDPGCTRKTFPNYFDVLQQYSKH.

Residues 1–74 (MAQISSMGQG…RISASVVTAQ (74 aa)) constitute a chloroplast transit peptide. 3-phosphoshikimate contacts are provided by Lys97, Ser98, and Arg102. A phosphoenolpyruvate-binding site is contributed by Lys97. Gly175 and Arg205 together coordinate phosphoenolpyruvate. Residues Ser252, Ser253, Gln254, Ser280, Asp405, and Lys432 each contribute to the 3-phosphoshikimate site. Gln254 is a binding site for phosphoenolpyruvate. The Proton acceptor role is filled by Asp405. Arg436, Arg478, and Lys503 together coordinate phosphoenolpyruvate.

It belongs to the EPSP synthase family.

Its subcellular location is the plastid. It is found in the chloroplast. The enzyme catalyses 3-phosphoshikimate + phosphoenolpyruvate = 5-O-(1-carboxyvinyl)-3-phosphoshikimate + phosphate. Its pathway is metabolic intermediate biosynthesis; chorismate biosynthesis; chorismate from D-erythrose 4-phosphate and phosphoenolpyruvate: step 6/7. Its function is as follows. Catalyzes the transfer of the enolpyruvyl moiety of phosphoenolpyruvate (PEP) to the 5-hydroxyl of shikimate-3-phosphate (S3P) to produce enolpyruvyl shikimate-3-phosphate and inorganic phosphate. The sequence is that of 3-phosphoshikimate 1-carboxyvinyltransferase 1, chloroplastic (EPSPS-1) from Nicotiana tabacum (Common tobacco).